The primary structure comprises 527 residues: Glucose-6-phosphate isomerase (527 aa).

Glutamate 323 serves as the catalytic Proton donor. Residues histidine 352 and lysine 454 contribute to the active site.

It belongs to the GPI family.

The protein resides in the cytoplasm. The catalysed reaction is alpha-D-glucose 6-phosphate = beta-D-fructose 6-phosphate. It participates in carbohydrate biosynthesis; gluconeogenesis. It functions in the pathway carbohydrate degradation; glycolysis; D-glyceraldehyde 3-phosphate and glycerone phosphate from D-glucose: step 2/4. In terms of biological role, catalyzes the reversible isomerization of glucose-6-phosphate to fructose-6-phosphate. The polypeptide is Glucose-6-phosphate isomerase (Prochlorococcus marinus (strain MIT 9312)).